The following is a 110-amino-acid chain: NADH-quinone oxidoreductase subunit K (110 aa).

A run of 3 helical transmembrane segments spans residues 13 to 33, 41 to 61, and 73 to 93; these read LNHYLILSSLVFTIGMFGLFM, ILMSIELMLLAVNINFVAFSI, and IIILTVAAAETSIGLAILLIY.

The protein belongs to the complex I subunit 4L family. NDH-1 is composed of 14 different subunits. Subunits NuoA, H, J, K, L, M, N constitute the membrane sector of the complex.

The protein resides in the cell inner membrane. It carries out the reaction a quinone + NADH + 5 H(+)(in) = a quinol + NAD(+) + 4 H(+)(out). In terms of biological role, NDH-1 shuttles electrons from NADH, via FMN and iron-sulfur (Fe-S) centers, to quinones in the respiratory chain. The immediate electron acceptor for the enzyme in this species is believed to be ubiquinone. Couples the redox reaction to proton translocation (for every two electrons transferred, four hydrogen ions are translocated across the cytoplasmic membrane), and thus conserves the redox energy in a proton gradient. The chain is NADH-quinone oxidoreductase subunit K from Rickettsia conorii (strain ATCC VR-613 / Malish 7).